A 396-amino-acid polypeptide reads, in one-letter code: S-adenosylmethionine synthase (396 aa).

Position 14 (H14) interacts with ATP. D16 is a Mg(2+) binding site. K(+) is bound at residue E42. L-methionine is bound by residues E55 and Q98. The flexible loop stretch occupies residues 98–108 (QSPDIALGVNK). ATP is bound by residues 174-176 (DGK), 241-242 (RF), D250, 256-257 (RK), A273, and K277. Position 250 (D250) interacts with L-methionine. K281 lines the L-methionine pocket.

It belongs to the AdoMet synthase family. As to quaternary structure, homotetramer; dimer of dimers. The cofactor is Mg(2+). It depends on K(+) as a cofactor.

Its subcellular location is the cytoplasm. It catalyses the reaction L-methionine + ATP + H2O = S-adenosyl-L-methionine + phosphate + diphosphate. It participates in amino-acid biosynthesis; S-adenosyl-L-methionine biosynthesis; S-adenosyl-L-methionine from L-methionine: step 1/1. In terms of biological role, catalyzes the formation of S-adenosylmethionine (AdoMet) from methionine and ATP. The overall synthetic reaction is composed of two sequential steps, AdoMet formation and the subsequent tripolyphosphate hydrolysis which occurs prior to release of AdoMet from the enzyme. This Pseudothermotoga lettingae (strain ATCC BAA-301 / DSM 14385 / NBRC 107922 / TMO) (Thermotoga lettingae) protein is S-adenosylmethionine synthase.